Reading from the N-terminus, the 151-residue chain is MLP-like protein 329 (151 aa).

It belongs to the MLP family.

This chain is MLP-like protein 329 (MLP329), found in Arabidopsis thaliana (Mouse-ear cress).